We begin with the raw amino-acid sequence, 177 residues long: MNKLILLPREFFARDTNLVSTELIGKVLYFQGKTAIITETESYIGQDDPACHAARGRTKRTDIMFGPAGFSYVYLIYGMYYCLNFVTETEGFPAATLIRGVHVISPENLYLNGPGKLCKYLGINISHNKCDLINNNEFFVSDIGLKLPYSTTTRIGITKGTDKLWRYVVTDIIRLPA.

It belongs to the DNA glycosylase MPG family.

The protein is Putative 3-methyladenine DNA glycosylase of Rickettsia felis (strain ATCC VR-1525 / URRWXCal2) (Rickettsia azadi).